Here is a 279-residue protein sequence, read N- to C-terminus: Undecaprenyl-diphosphatase (279 aa).

Helical transmembrane passes span 2–22, 44–64, 85–105, 113–133, 163–183, 188–208, 223–243, and 255–275; these read LIIE…TEWL, AFIE…VMLI, WQLW…AVPL, FYFM…FIWI, VLSI…AIIL, TVAA…YSGL, AQVL…LLAI, and FTIF…YSFF.

The protein belongs to the UppP family.

The protein resides in the cell membrane. It carries out the reaction di-trans,octa-cis-undecaprenyl diphosphate + H2O = di-trans,octa-cis-undecaprenyl phosphate + phosphate + H(+). Catalyzes the dephosphorylation of undecaprenyl diphosphate (UPP). Confers resistance to bacitracin. The polypeptide is Undecaprenyl-diphosphatase (Streptococcus pyogenes serotype M12 (strain MGAS2096)).